The following is a 213-amino-acid chain: Peptidyl-tRNA hydrolase (213 aa).

Tyrosine 26 provides a ligand contact to tRNA. The active-site Proton acceptor is the histidine 31. TRNA is bound by residues tyrosine 78, asparagine 80, and asparagine 126.

This sequence belongs to the PTH family. In terms of assembly, monomer.

Its subcellular location is the cytoplasm. The catalysed reaction is an N-acyl-L-alpha-aminoacyl-tRNA + H2O = an N-acyl-L-amino acid + a tRNA + H(+). Functionally, hydrolyzes ribosome-free peptidyl-tRNAs (with 1 or more amino acids incorporated), which drop off the ribosome during protein synthesis, or as a result of ribosome stalling. In terms of biological role, catalyzes the release of premature peptidyl moieties from peptidyl-tRNA molecules trapped in stalled 50S ribosomal subunits, and thus maintains levels of free tRNAs and 50S ribosomes. The chain is Peptidyl-tRNA hydrolase from Nostoc punctiforme (strain ATCC 29133 / PCC 73102).